A 616-amino-acid chain; its full sequence is Chaperone protein DnaK (616 aa).

Residue threonine 174 is modified to Phosphothreonine; by autocatalysis. Positions 576–616 (QASAPGAGPEGASGGFGGENKKDDNVVDADYTVIDDDKKKT) are disordered. Positions 583–593 (GPEGASGGFGG) are enriched in gly residues.

The protein belongs to the heat shock protein 70 family.

Its function is as follows. Acts as a chaperone. This chain is Chaperone protein DnaK, found in Heliobacterium modesticaldum (strain ATCC 51547 / Ice1).